The primary structure comprises 168 residues: DOMON domain-containing protein CBG21753 (168 aa).

An N-terminal signal peptide occupies residues 1-17 (MIKSMILVALILAFASA). Residues 25 to 143 (SGFQSYWRFA…CQKWRWIKSG (119 aa)) form the DOMON domain. Asparagine 35 and asparagine 94 each carry an N-linked (GlcNAc...) asparagine glycan. Residues 148 to 168 (GQLTRNSKSPKDKKVCPMECN) form a disordered region. Basic and acidic residues predominate over residues 156–168 (SPKDKKVCPMECN).

It localises to the secreted. The polypeptide is DOMON domain-containing protein CBG21753 (Caenorhabditis briggsae).